The following is a 498-amino-acid chain: Bifunctional protein GlmU (498 aa).

The segment at 1 to 238 (MSDAAVVILA…PALVAGVNDR (238 aa)) is pyrophosphorylase. UDP-N-acetyl-alpha-D-glucosamine-binding positions include 9 to 12 (LAAG), K23, Q80, and 85 to 86 (GT). D111 is a Mg(2+) binding site. UDP-N-acetyl-alpha-D-glucosamine-binding residues include G148, E163, N178, and N236. Residue N236 participates in Mg(2+) binding. Residues 239-259 (VQLADLGAELNRRVVAAHQRA) form a linker region. The tract at residues 260-498 (GVTIVDPATT…TAKPAPATGE (239 aa)) is N-acetyltransferase. Residues R341 and K359 each coordinate UDP-N-acetyl-alpha-D-glucosamine. Catalysis depends on H371, which acts as the Proton acceptor. UDP-N-acetyl-alpha-D-glucosamine contacts are provided by Y374 and N385. Residues A388, 394–395 (NY), S413, and A431 each bind acetyl-CoA. Residues 470 to 498 (AAEAAAADGDTAAADRAAATAKPAPATGE) are disordered.

It in the N-terminal section; belongs to the N-acetylglucosamine-1-phosphate uridyltransferase family. In the C-terminal section; belongs to the transferase hexapeptide repeat family. Homotrimer. Mg(2+) is required as a cofactor.

The protein localises to the cytoplasm. The enzyme catalyses alpha-D-glucosamine 1-phosphate + acetyl-CoA = N-acetyl-alpha-D-glucosamine 1-phosphate + CoA + H(+). The catalysed reaction is N-acetyl-alpha-D-glucosamine 1-phosphate + UTP + H(+) = UDP-N-acetyl-alpha-D-glucosamine + diphosphate. It participates in nucleotide-sugar biosynthesis; UDP-N-acetyl-alpha-D-glucosamine biosynthesis; N-acetyl-alpha-D-glucosamine 1-phosphate from alpha-D-glucosamine 6-phosphate (route II): step 2/2. The protein operates within nucleotide-sugar biosynthesis; UDP-N-acetyl-alpha-D-glucosamine biosynthesis; UDP-N-acetyl-alpha-D-glucosamine from N-acetyl-alpha-D-glucosamine 1-phosphate: step 1/1. Its pathway is bacterial outer membrane biogenesis; LPS lipid A biosynthesis. Functionally, catalyzes the last two sequential reactions in the de novo biosynthetic pathway for UDP-N-acetylglucosamine (UDP-GlcNAc). The C-terminal domain catalyzes the transfer of acetyl group from acetyl coenzyme A to glucosamine-1-phosphate (GlcN-1-P) to produce N-acetylglucosamine-1-phosphate (GlcNAc-1-P), which is converted into UDP-GlcNAc by the transfer of uridine 5-monophosphate (from uridine 5-triphosphate), a reaction catalyzed by the N-terminal domain. This is Bifunctional protein GlmU from Mycolicibacterium gilvum (strain PYR-GCK) (Mycobacterium gilvum (strain PYR-GCK)).